The sequence spans 428 residues: Adenylosuccinate synthetase (428 aa).

GTP is bound by residues 12 to 18 (GDEGKGK) and 40 to 42 (GHT). The Proton acceptor role is filled by aspartate 13. 2 residues coordinate Mg(2+): aspartate 13 and glycine 40. Residues 13–16 (DEGK), 38–41 (NAGH), threonine 129, arginine 143, glutamine 224, threonine 239, and arginine 303 each bind IMP. Histidine 41 (proton donor) is an active-site residue. 299-305 (VTTGRIR) contacts substrate. Residues arginine 305, 331–333 (KVD), and 410–412 (AYG) each bind GTP.

Belongs to the adenylosuccinate synthetase family. Homodimer. Mg(2+) is required as a cofactor.

Its subcellular location is the cytoplasm. The enzyme catalyses IMP + L-aspartate + GTP = N(6)-(1,2-dicarboxyethyl)-AMP + GDP + phosphate + 2 H(+). It participates in purine metabolism; AMP biosynthesis via de novo pathway; AMP from IMP: step 1/2. Its function is as follows. Plays an important role in the de novo pathway of purine nucleotide biosynthesis. Catalyzes the first committed step in the biosynthesis of AMP from IMP. In Francisella tularensis subsp. novicida (strain U112), this protein is Adenylosuccinate synthetase.